The primary structure comprises 473 residues: mRNA export factor ICP27 homolog (473 aa).

Disordered stretches follow at residues 57-81 (QELL…NSIY) and 123-143 (QTKR…NFPM). Residues C362, H438, C442, and C447 each contribute to the Zn(2+) site. The CHC2-type zinc finger occupies 362–447 (CKYGTEKRSM…HTRRCSDPAC (86 aa)).

Belongs to the HHV-1 ICP27 protein family. Associates in a complex with RNA, and host export factors NXF1/TAP and ALYREF; these interactions allow nuclear export of viral transcripts.

Its subcellular location is the host cytoplasm. The protein resides in the host nucleus. Functionally, multifunctional regulator of the expression of viral genes that mediates nuclear export of viral intronless mRNAs. This immediate early (EI) protein promotes the nuclear export of viral intronless mRNAs by interacting with mRNAs and host NXF1/TAP. The sequence is that of mRNA export factor ICP27 homolog from Gallus gallus (Chicken).